The following is a 256-amino-acid chain: Small ribosomal subunit protein uS2 (256 aa).

This sequence belongs to the universal ribosomal protein uS2 family.

This Streptococcus agalactiae serotype Ia (strain ATCC 27591 / A909 / CDC SS700) protein is Small ribosomal subunit protein uS2.